The primary structure comprises 50 residues: U-megalopygitoxin(9)-Mo13 (50 aa).

The N-terminal stretch at 1–23 is a signal peptide; it reads MKLVFLFFIVAVMVSLFVGMTEA. Cysteines 33 and 40 form a disulfide.

Belongs to the caterpillar 9 family. As to expression, expressed by the venom apparatus.

The protein localises to the secreted. Its function is as follows. Probable toxin. This Megalopyge opercularis (Southern flannel moth) protein is U-megalopygitoxin(9)-Mo13.